The sequence spans 319 residues: Inactive hydroxysteroid dehydrogenase-like protein 1 (319 aa).

The interval 2 to 82 (AAVDSFQLLY…CGASEAIAKA (81 aa)) is required for mitochondria translocation. Residues 74-80 (GASEAIA), lysine 99, and aspartate 125 each bind NADP(+).

This sequence belongs to the short-chain dehydrogenases/reductases (SDR) family. 17-beta-HSD 3 subfamily.

The protein localises to the mitochondrion. This chain is Inactive hydroxysteroid dehydrogenase-like protein 1 (hsdl1), found in Danio rerio (Zebrafish).